A 1624-amino-acid chain; its full sequence is ATP-binding cassette sub-family A member 6 (1624 aa).

Residues 31-51 (LLEWSIPIIIGLHMGLFSYLA) traverse the membrane as a helical segment. N-linked (GlcNAc...) asparagine glycans are attached at residues asparagine 84 and asparagine 91. A run of 6 helical transmembrane segments spans residues 222–242 (IFIL…SSNV), 267–287 (WGLI…IIIT), 297–317 (FLVI…VTFL), 326–346 (VLTN…GFTV), 356–376 (EWVL…KVIF), and 395–415 (VMIA…VLAL). The region spanning 478-713 (IRIRNIKKEY…WGLGYHLSLF (236 aa)) is the ABC transporter 1 domain. ATP is bound at residue 514-521 (GHSGAGKS). An N-linked (GlcNAc...) asparagine glycan is attached at asparagine 576. 8 consecutive transmembrane segments (helical) span residues 854–874 (AFLI…IEYV), 971–991 (LHCF…MLNH), 1005–1025 (FIVL…CVIC), 1058–1078 (WCGQ…TSYF), 1094–1114 (IVFS…FLTY), 1130–1150 (WSIC…NGPF), 1154–1174 (LVIS…LVVL), and 1194–1214 (AVDL…IFVL). An ABC transporter 2 domain is found at 1282-1520 (LHKEYAGQKK…FGQDYVLELR (239 aa)). 1320–1327 (GPDGAGKS) serves as a coordination point for ATP.

It belongs to the ABC transporter superfamily. ABCA family. As to expression, widely expressed with higher expression in heart, lung, brain, spleen and testis.

The protein localises to the golgi apparatus membrane. Probable transporter which may play a role in macrophage lipid transport and homeostasis. This is ATP-binding cassette sub-family A member 6 (Abca6) from Mus musculus (Mouse).